The chain runs to 336 residues: MLYPLIRQFLFQLDPEKAHELTIQQLKRIAGTPLEYLVRQSVPTKAVTCMGIAFKNPLGLAAGLDKNGECIDALGAMGFGFIEVGTVTPHAQIGNEKPRLFRLTKAYGLINRMGFNNKGVDNLVNNIQKSHFGGVLGINIGKNKDTPIEQGKDDYLICMEKVYPYANYIAVNISSPNTPQLTTLQSGEILDDLLRAIKDKQAKLQEYHHKYVPIAVKITPDMTESELIQMADLLVQHKIDGIIATNTTTSRELVHGLDHSSQSGGLSGRPLQLMSTEVIRILSSKLQGKLPIIGVGGIDSLISAREKMAAGATLIQIYSSFIFHGPRLIKDIISDL.

Residues 62–66 (AGLDK) and Thr86 contribute to the FMN site. Lys66 provides a ligand contact to substrate. 111 to 115 (NRMGF) lines the substrate pocket. Residues Asn139 and Asn172 each contribute to the FMN site. Asn172 contacts substrate. Ser175 functions as the Nucleophile in the catalytic mechanism. Asn177 is a substrate binding site. 2 residues coordinate FMN: Lys217 and Thr245. 246-247 (NT) contacts substrate. FMN contacts are provided by residues Gly268, Gly297, and 318–319 (YS).

Belongs to the dihydroorotate dehydrogenase family. Type 2 subfamily. Monomer. Requires FMN as cofactor.

It localises to the cell membrane. It catalyses the reaction (S)-dihydroorotate + a quinone = orotate + a quinol. Its pathway is pyrimidine metabolism; UMP biosynthesis via de novo pathway; orotate from (S)-dihydroorotate (quinone route): step 1/1. Catalyzes the conversion of dihydroorotate to orotate with quinone as electron acceptor. This chain is Dihydroorotate dehydrogenase (quinone), found in Baumannia cicadellinicola subsp. Homalodisca coagulata.